Consider the following 940-residue polypeptide: Isoleucine--tRNA ligase (940 aa).

The 'HIGH' region signature appears at 58-68 (PYANGSIHIGH). L-isoleucyl-5'-AMP is bound at residue glutamate 564. Residues 605-609 (KMSKS) carry the 'KMSKS' region motif. An ATP-binding site is contributed by lysine 608. Zn(2+) is bound by residues cysteine 903, cysteine 906, cysteine 923, and cysteine 926.

The protein belongs to the class-I aminoacyl-tRNA synthetase family. IleS type 1 subfamily. Monomer. It depends on Zn(2+) as a cofactor.

It is found in the cytoplasm. The catalysed reaction is tRNA(Ile) + L-isoleucine + ATP = L-isoleucyl-tRNA(Ile) + AMP + diphosphate. In terms of biological role, catalyzes the attachment of isoleucine to tRNA(Ile). As IleRS can inadvertently accommodate and process structurally similar amino acids such as valine, to avoid such errors it has two additional distinct tRNA(Ile)-dependent editing activities. One activity is designated as 'pretransfer' editing and involves the hydrolysis of activated Val-AMP. The other activity is designated 'posttransfer' editing and involves deacylation of mischarged Val-tRNA(Ile). In Shewanella amazonensis (strain ATCC BAA-1098 / SB2B), this protein is Isoleucine--tRNA ligase.